The primary structure comprises 532 residues: Germ cell nuclear acidic-1 protein (532 aa).

Residues 1-10 (MPTPFRDLHN) show a composition bias toward basic and acidic residues. Disordered regions lie at residues 1-50 (MPTP…EPIS), 84-181 (REAP…GNFE), and 213-253 (YISE…DRKQ). The span at 14–32 (ASASSYETAWSSSFSSRRS) shows a compositional bias: low complexity. Basic and acidic residues-rich tracts occupy residues 39–48 (SNLKEIKDEP), 94–107 (LLQKIEKEDERDML), and 124–133 (KPKEVKKALK). Acidic residues predominate over residues 213-235 (YISEESSEEESEEEEEDVDDEEY). Basic and acidic residues predominate over residues 236 to 251 (RESSPEVEAKISYSDR). The SprT-like domain occupies 308–398 (RRIFSAIPSE…GARCSSVFKS (91 aa)). The tract at residues 468-489 (AKPVGPILSNSSKPSPPAPRRI) is disordered.

It belongs to the serine-aspartate repeat-containing protein (SDr) family. As to quaternary structure, interacts with top-2; this interaction allows the resolution of topoisomerase II (top-2) DNA-protein cross-links. In terms of tissue distribution, mainly expressed in germ cells and early embryonic, proliferating cells.

Its subcellular location is the chromosome. Functionally, may play a role in DNA-protein cross-links (DPCs) clearance through a SUMO-dependent recruitment to sites of DPCs, ensuring the genomic stability by protecting germ cells and early embryos from various sources of damage. May resolve the topoisomerase II (top-2) DPCs. Limits replication stress and DNA double-strand breaks. The chain is Germ cell nuclear acidic-1 protein from Caenorhabditis elegans.